Reading from the N-terminus, the 152-residue chain is UPF0178 protein YaiI (152 aa).

The protein belongs to the UPF0178 family.

The chain is UPF0178 protein YaiI from Escherichia coli O6:K15:H31 (strain 536 / UPEC).